Consider the following 376-residue polypeptide: Adipocyte plasma membrane-associated protein (376 aa).

A helical membrane pass occupies residues 1–17 (MTFLMLAVSLAIPLLGA). Asn120 carries an N-linked (GlcNAc...) asparagine glycan.

Belongs to the strictosidine synthase family.

The protein resides in the membrane. Exhibits strong arylesterase activity with beta-naphthyl acetate and phenyl acetate. May play a role in adipocyte differentiation. This Rattus norvegicus (Rat) protein is Adipocyte plasma membrane-associated protein (Apmap).